An 85-amino-acid chain; its full sequence is UPF0297 protein LBUL_1485 (85 aa).

The protein belongs to the UPF0297 family.

The polypeptide is UPF0297 protein LBUL_1485 (Lactobacillus delbrueckii subsp. bulgaricus (strain ATCC BAA-365 / Lb-18)).